Consider the following 107-residue polypeptide: Iron-binding protein IscA (107 aa).

Fe cation-binding residues include cysteine 35, cysteine 99, and cysteine 101.

The protein belongs to the HesB/IscA family. As to quaternary structure, homodimer; may form tetramers and higher multimers. Requires Fe cation as cofactor.

Its function is as follows. Is able to transfer iron-sulfur clusters to apo-ferredoxin. Multiple cycles of [2Fe2S] cluster formation and transfer are observed, suggesting that IscA acts catalytically. Recruits intracellular free iron so as to provide iron for the assembly of transient iron-sulfur cluster in IscU in the presence of IscS, L-cysteine and the thioredoxin reductase system TrxA/TrxB. The chain is Iron-binding protein IscA from Xenorhabdus nematophila (strain ATCC 19061 / DSM 3370 / CCUG 14189 / LMG 1036 / NCIMB 9965 / AN6).